The sequence spans 188 residues: Ribosome-recycling factor (188 aa).

Belongs to the RRF family.

The protein resides in the cytoplasm. Responsible for the release of ribosomes from messenger RNA at the termination of protein biosynthesis. May increase the efficiency of translation by recycling ribosomes from one round of translation to another. This is Ribosome-recycling factor from Anaeromyxobacter sp. (strain K).